A 69-amino-acid chain; its full sequence is Beta-defensin 11 (69 aa).

Positions 1-23 are cleaved as a signal peptide; the sequence is MRTLCSLLLIGCLLFSYDTPVVG. 3 cysteine pairs are disulfide-bonded: C35–C64, C42–C57, and C47–C65.

The protein belongs to the beta-defensin family.

The protein localises to the secreted. Functionally, has antibacterial activity. The chain is Beta-defensin 11 (Defb11) from Rattus norvegicus (Rat).